A 335-amino-acid polypeptide reads, in one-letter code: Leukocyte immunoglobulin-like receptor subfamily B member 4A (335 aa).

A signal peptide spans methionine 1–alanine 23. Over glycine 24–lysine 238 the chain is Extracellular. 2 Ig-like C2-type domains span residues tyrosine 42–serine 125 and proline 124–asparagine 212. A disulfide bridge links cysteine 49 with cysteine 98. N-linked (GlcNAc...) asparagine glycans are attached at residues asparagine 133 and asparagine 191. Residues cysteine 144 and cysteine 196 are joined by a disulfide bond. A helical transmembrane segment spans residues isoleucine 239 to isoleucine 260. The Cytoplasmic segment spans residues glycine 261–serine 335. Short sequence motifs (ITIM motif) lie at residues isoleucine 298–valine 303 and valine 320–leucine 325.

Interacts (when tyrosine phosphorylated) with SH2 domain-containing phosphatases PTPN6/SHP-1 and PTPN11/SHP-2; interaction with PTPN6 enhances inhibition of mast cell activation. In terms of processing, tyrosine phosphorylated. In terms of tissue distribution, expressed on mast cells and natural killer cells (at protein level). Expressed on neutrophils (at protein level). Expressed on eosinophils (at protein level). Expressed on dendritic cells (at protein level). Expressed on memory and marginal zone B cells (at protein level). Expressed on CD8 T cells (at protein level). Expressed in the uterus of pregnant mice where it is detected at day 4.0 of pregnancy with levels dropping at day 4.5. Highly expressed in the luminal epithelium of uterine endometrium with lower levels in the glandular epithelium.

Its subcellular location is the cell membrane. Functionally, inhibitory receptor involved in the down-regulation of the immune response. Receptor for FN1. Receptor for integrin ITGAV/ITGB3. Inhibits IgE-mediated mast cell activation, at least in part through interaction with ITGAV/ITGB3. Also inhibits KITLG/SCF-mediated mast cell activation. Through interaction with ITGAV/ITGB3, inhibits antibody production by memory and marginal zone B cells, probably by suppressing their differentiation into plasma cells. Inhibits IFNG production by CD8 T cells, CD4 T cells and natural killer cells. Inhibits antigen presentation by dendritic cells to T cells, preventing T cell activation. Inhibits lipopolysaccharide-mediated neutrophil-dependent vascular injury. Suppresses the allergic inflammatory response by inhibiting infiltration of neutrophils and eosinophils and preventing mast cell degranulation. Inhibits lysis by natural killer cells. In Mus musculus (Mouse), this protein is Leukocyte immunoglobulin-like receptor subfamily B member 4A.